The sequence spans 157 residues: Protein Smg (157 aa).

Belongs to the Smg family.

In Escherichia coli O139:H28 (strain E24377A / ETEC), this protein is Protein Smg.